A 104-amino-acid polypeptide reads, in one-letter code: L-rhamnose mutarotase (104 aa).

Tyr-18 contributes to the substrate binding site. His-22 (proton donor) is an active-site residue. Substrate contacts are provided by residues Tyr-41 and 76 to 77 (WW).

The protein belongs to the rhamnose mutarotase family. In terms of assembly, homodimer.

Its subcellular location is the cytoplasm. It catalyses the reaction alpha-L-rhamnose = beta-L-rhamnose. The protein operates within carbohydrate metabolism; L-rhamnose metabolism. Functionally, involved in the anomeric conversion of L-rhamnose. This Salmonella dublin (strain CT_02021853) protein is L-rhamnose mutarotase.